The primary structure comprises 108 residues: Protein SMALL AUXIN UP-REGULATED RNA 51 (108 aa).

This sequence belongs to the ARG7 family. Expressed in organ primordia. Hardly observed in leaves.

It localises to the cell membrane. Functionally, provide a mechanistic link between auxin and plasma membrane H(+)-ATPases (PM H(+)-ATPases, e.g. AHA1 and AHA2), and triggers PM H(+)-ATPases activity by promoting phosphorylation of their C-terminal autoinhibitory domain as a result of PP2C-D subfamily of type 2C phosphatases inhibition, thus leading to the acidification of the apoplast and the facilitation of solutes and water uptake to drive cell expansion. Triggers plant growth probably by promoting cell elongation. Regulates branch angles and bending. In Arabidopsis thaliana (Mouse-ear cress), this protein is Protein SMALL AUXIN UP-REGULATED RNA 51.